We begin with the raw amino-acid sequence, 291 residues long: Protein/nucleic acid deglycase HchA (291 aa).

The span at 1-18 (MSNERDTSRTPTPDHAEH) shows a compositional bias: basic and acidic residues. Residues 1–24 (MSNERDTSRTPTPDHAEHNAFFPS) form a disordered region. Catalysis depends on Cys-188, which acts as the Nucleophile.

The protein belongs to the peptidase C56 family. HchA subfamily.

The protein resides in the cytoplasm. The enzyme catalyses N(omega)-(1-hydroxy-2-oxopropyl)-L-arginyl-[protein] + H2O = lactate + L-arginyl-[protein] + H(+). It catalyses the reaction N(6)-(1-hydroxy-2-oxopropyl)-L-lysyl-[protein] + H2O = lactate + L-lysyl-[protein] + H(+). It carries out the reaction S-(1-hydroxy-2-oxopropyl)-L-cysteinyl-[protein] + H2O = lactate + L-cysteinyl-[protein] + H(+). The catalysed reaction is N(omega)-(1-hydroxy-2-oxoethyl)-L-arginyl-[protein] + H2O = L-arginyl-[protein] + glycolate + H(+). The enzyme catalyses N(6)-(1-hydroxy-2-oxoethyl)-L-lysyl-[protein] + H2O = glycolate + L-lysyl-[protein] + H(+). It catalyses the reaction S-(1-hydroxy-2-oxoethyl)-L-cysteinyl-[protein] + H2O = glycolate + L-cysteinyl-[protein] + H(+). It carries out the reaction N(2)-(1-hydroxy-2-oxopropyl)-dGTP + H2O = lactate + dGTP + H(+). The catalysed reaction is N(2)-(1-hydroxy-2-oxopropyl)-GTP + H2O = lactate + GTP + H(+). The enzyme catalyses N(2)-(1-hydroxy-2-oxopropyl)-GDP + H2O = lactate + GDP + H(+). It catalyses the reaction N(2)-(1-hydroxy-2-oxopropyl)-GMP + H2O = lactate + GMP + H(+). It carries out the reaction N(2)-(1-hydroxy-2-oxoethyl)-dGTP + H2O = dGTP + glycolate + H(+). The catalysed reaction is N(2)-(1-hydroxy-2-oxoethyl)-GTP + H2O = glycolate + GTP + H(+). The enzyme catalyses N(2)-(1-hydroxy-2-oxoethyl)-GDP + H2O = glycolate + GDP + H(+). It catalyses the reaction N(2)-(1-hydroxy-2-oxoethyl)-GMP + H2O = glycolate + GMP + H(+). It carries out the reaction an N(2)-(1-hydroxy-2-oxopropyl)-guanosine in RNA + H2O = a guanosine in RNA + lactate + H(+). The catalysed reaction is an N(2)-(1-hydroxy-2-oxopropyl)-2'-deoxyguanosine in DNA + H2O = a 2'-deoxyguanosine in DNA + lactate + H(+). The enzyme catalyses an N(2)-(1-hydroxy-2-oxoethyl)-guanosine in RNA + H2O = a guanosine in RNA + glycolate + H(+). It catalyses the reaction an N(2)-(1-hydroxy-2-oxoethyl)-2'-deoxyguanosine in DNA + H2O = a 2'-deoxyguanosine in DNA + glycolate + H(+). Protein and nucleotide deglycase that catalyzes the deglycation of the Maillard adducts formed between amino groups of proteins or nucleotides and reactive carbonyl groups of glyoxals. Thus, functions as a protein deglycase that repairs methylglyoxal- and glyoxal-glycated proteins, and releases repaired proteins and lactate or glycolate, respectively. Deglycates cysteine, arginine and lysine residues in proteins, and thus reactivates these proteins by reversing glycation by glyoxals. Acts on early glycation intermediates (hemithioacetals and aminocarbinols), preventing the formation of Schiff bases and advanced glycation endproducts (AGE). Also functions as a nucleotide deglycase able to repair glycated guanine in the free nucleotide pool (GTP, GDP, GMP, dGTP) and in DNA and RNA. Is thus involved in a major nucleotide repair system named guanine glycation repair (GG repair), dedicated to reversing methylglyoxal and glyoxal damage via nucleotide sanitization and direct nucleic acid repair. Plays an important role in protecting cells from carbonyl stress. This chain is Protein/nucleic acid deglycase HchA, found in Pseudomonas aeruginosa (strain UCBPP-PA14).